Here is a 199-residue protein sequence, read N- to C-terminus: Holliday junction branch migration complex subunit RuvA (199 aa).

Positions 1–65 (MIASLRGKLL…DRGQRLFGFG (65 aa)) are domain I. The tract at residues 66 to 144 (SKKDRESFEL…KFEMFLNEGT (79 aa)) is domain II. The tract at residues 145–155 (TESSFVDRETD) is flexible linker. The tract at residues 155–199 (DLATLALIQLGFDEKSATKQVADAKKLNPGLSASDIVKQVITGTR) is domain III.

The protein belongs to the RuvA family. As to quaternary structure, homotetramer. Forms an RuvA(8)-RuvB(12)-Holliday junction (HJ) complex. HJ DNA is sandwiched between 2 RuvA tetramers; dsDNA enters through RuvA and exits via RuvB. An RuvB hexamer assembles on each DNA strand where it exits the tetramer. Each RuvB hexamer is contacted by two RuvA subunits (via domain III) on 2 adjacent RuvB subunits; this complex drives branch migration. In the full resolvosome a probable DNA-RuvA(4)-RuvB(12)-RuvC(2) complex forms which resolves the HJ.

The protein localises to the cytoplasm. In terms of biological role, the RuvA-RuvB-RuvC complex processes Holliday junction (HJ) DNA during genetic recombination and DNA repair, while the RuvA-RuvB complex plays an important role in the rescue of blocked DNA replication forks via replication fork reversal (RFR). RuvA specifically binds to HJ cruciform DNA, conferring on it an open structure. The RuvB hexamer acts as an ATP-dependent pump, pulling dsDNA into and through the RuvAB complex. HJ branch migration allows RuvC to scan DNA until it finds its consensus sequence, where it cleaves and resolves the cruciform DNA. This is Holliday junction branch migration complex subunit RuvA from Leptospira biflexa serovar Patoc (strain Patoc 1 / Ames).